The primary structure comprises 430 residues: Enolase (430 aa).

Residue Q163 coordinates (2R)-2-phosphoglycerate. E205 serves as the catalytic Proton donor. D242, E287, and D314 together coordinate Mg(2+). Residues K339, R368, S369, and K390 each contribute to the (2R)-2-phosphoglycerate site. K339 (proton acceptor) is an active-site residue.

The protein belongs to the enolase family. It depends on Mg(2+) as a cofactor.

The protein localises to the cytoplasm. Its subcellular location is the secreted. The protein resides in the cell surface. It catalyses the reaction (2R)-2-phosphoglycerate = phosphoenolpyruvate + H2O. It participates in carbohydrate degradation; glycolysis; pyruvate from D-glyceraldehyde 3-phosphate: step 4/5. Its function is as follows. Catalyzes the reversible conversion of 2-phosphoglycerate (2-PG) into phosphoenolpyruvate (PEP). It is essential for the degradation of carbohydrates via glycolysis. The polypeptide is Enolase (Bacillus pumilus (strain SAFR-032)).